The sequence spans 337 residues: B1 bradykinin receptor (337 aa).

Topologically, residues 1–41 (MASEVLLELQPSNRSLQAPANITSCESALEDWDLLYRVLPG) are extracellular. Asn-13 and Asn-21 each carry an N-linked (GlcNAc...) asparagine glycan. A helical membrane pass occupies residues 42 to 62 (FVITICFFGLLGNLLVLSFFL). Residues 63–83 (LPWRQWWWQQRQRQQRLTIAE) lie on the Cytoplasmic side of the membrane. The chain crosses the membrane as a helical span at residues 84–104 (IYLANLAASDLVFVLGLPFWA). Over 105 to 121 (ENIGNRFNWPFGTDLCR) the chain is Extracellular. A disulfide bridge connects residues Cys-120 and Cys-199. Residues 122-142 (VVSGVIKANLFVSIFLVVAIS) form a helical membrane-spanning segment. Residues 143-164 (QDRYRLLVYPMTSWGYRRRRQA) lie on the Cytoplasmic side of the membrane. Residues 165–185 (QATCLLIWVAGGLLSIPTFLL) traverse the membrane as a helical segment. Over 186-217 (RSVKVVPDLNVSACILLFPHEAWHFARMVELN) the chain is Extracellular. Residue Asn-195 is glycosylated (N-linked (GlcNAc...) asparagine). Residues 218-238 (VLGFLLPVTAIIFFNYHILAS) traverse the membrane as a helical segment. Over 239-261 (LRGQKEASRTRCGGPKGSKTTGL) the chain is Cytoplasmic. A helical transmembrane segment spans residues 262-282 (ILTLVASFLVCWCPYHFFAFL). Topologically, residues 283–305 (DFLVQVRVIQDCSWKEITDLGLQ) are extracellular. The helical transmembrane segment at 306–326 (LANFFAFVNSCLNPLIYVFAG) threads the bilayer. Residues 327–337 (RLLKTRVLGTL) are Cytoplasmic-facing.

The protein belongs to the G-protein coupled receptor 1 family. Bradykinin receptor subfamily. BDKRB1 sub-subfamily. In terms of tissue distribution, expressed in bladder, lung, duodenum, kidney, uterus, thymus, salivary gland, testis, prostate, macrophages, aorta, spleen and heart.

It localises to the cell membrane. Functionally, this is a receptor for bradykinin. Could be a factor in chronic pain and inflammation. The polypeptide is B1 bradykinin receptor (Bdkrb1) (Rattus norvegicus (Rat)).